Here is a 450-residue protein sequence, read N- to C-terminus: Phosphoglucosamine mutase (450 aa).

The Phosphoserine intermediate role is filled by Ser-102. Mg(2+) is bound by residues Ser-102, Asp-243, Asp-245, and Asp-247. Phosphoserine is present on Ser-102.

Belongs to the phosphohexose mutase family. It depends on Mg(2+) as a cofactor. Activated by phosphorylation.

The catalysed reaction is alpha-D-glucosamine 1-phosphate = D-glucosamine 6-phosphate. Its function is as follows. Catalyzes the conversion of glucosamine-6-phosphate to glucosamine-1-phosphate. The polypeptide is Phosphoglucosamine mutase (Allorhizobium ampelinum (strain ATCC BAA-846 / DSM 112012 / S4) (Agrobacterium vitis (strain S4))).